Consider the following 429-residue polypeptide: Adenosylmethionine-8-amino-7-oxononanoate aminotransferase (429 aa).

W52 lines the substrate pocket. Residue G112 to S113 participates in pyridoxal 5'-phosphate binding. Y144 contributes to the substrate binding site. Residue D245 coordinates pyridoxal 5'-phosphate. 2 residues coordinate substrate: K274 and G307. Position 274 is an N6-(pyridoxal phosphate)lysine (K274). Pyridoxal 5'-phosphate is bound at residue P308–T309. R391 lines the substrate pocket.

It belongs to the class-III pyridoxal-phosphate-dependent aminotransferase family. BioA subfamily. Homodimer. It depends on pyridoxal 5'-phosphate as a cofactor.

It localises to the cytoplasm. The enzyme catalyses (8S)-8-amino-7-oxononanoate + S-adenosyl-L-methionine = S-adenosyl-4-methylsulfanyl-2-oxobutanoate + (7R,8S)-7,8-diammoniononanoate. Its pathway is cofactor biosynthesis; biotin biosynthesis; 7,8-diaminononanoate from 8-amino-7-oxononanoate (SAM route): step 1/1. Catalyzes the transfer of the alpha-amino group from S-adenosyl-L-methionine (SAM) to 7-keto-8-aminopelargonic acid (KAPA) to form 7,8-diaminopelargonic acid (DAPA). It is the only aminotransferase known to utilize SAM as an amino donor. This Buchnera aphidicola subsp. Baizongia pistaciae (strain Bp) protein is Adenosylmethionine-8-amino-7-oxononanoate aminotransferase.